A 293-amino-acid chain; its full sequence is Bifunctional protein FolD (293 aa).

NADP(+) is bound by residues 166–168, serine 191, and isoleucine 232; that span reads GRS.

Belongs to the tetrahydrofolate dehydrogenase/cyclohydrolase family. In terms of assembly, homodimer.

It carries out the reaction (6R)-5,10-methylene-5,6,7,8-tetrahydrofolate + NADP(+) = (6R)-5,10-methenyltetrahydrofolate + NADPH. It catalyses the reaction (6R)-5,10-methenyltetrahydrofolate + H2O = (6R)-10-formyltetrahydrofolate + H(+). It participates in one-carbon metabolism; tetrahydrofolate interconversion. Catalyzes the oxidation of 5,10-methylenetetrahydrofolate to 5,10-methenyltetrahydrofolate and then the hydrolysis of 5,10-methenyltetrahydrofolate to 10-formyltetrahydrofolate. The polypeptide is Bifunctional protein FolD (Synechococcus sp. (strain JA-2-3B'a(2-13)) (Cyanobacteria bacterium Yellowstone B-Prime)).